Here is a 161-residue protein sequence, read N- to C-terminus: Photosystem I reaction center subunit XI (161 aa).

Helical transmembrane passes span 84–104 (LISTIALVLIATICLSAYGLV) and 126–146 (FTGGFFIGAMGGAVVAFFLLE).

Belongs to the PsaL family.

The protein localises to the cellular thylakoid membrane. The chain is Photosystem I reaction center subunit XI from Trichodesmium erythraeum (strain IMS101).